Here is a 105-residue protein sequence, read N- to C-terminus: Large ribosomal subunit protein uL24 (105 aa).

It belongs to the universal ribosomal protein uL24 family. As to quaternary structure, part of the 50S ribosomal subunit.

In terms of biological role, one of two assembly initiator proteins, it binds directly to the 5'-end of the 23S rRNA, where it nucleates assembly of the 50S subunit. One of the proteins that surrounds the polypeptide exit tunnel on the outside of the subunit. The sequence is that of Large ribosomal subunit protein uL24 from Leptothrix cholodnii (strain ATCC 51168 / LMG 8142 / SP-6) (Leptothrix discophora (strain SP-6)).